Reading from the N-terminus, the 734-residue chain is Photosystem I P700 chlorophyll a apoprotein A2 (734 aa).

The next 8 helical transmembrane spans lie at 46–69 (IFAS…FHVA), 135–158 (LYTG…LHLQ), 175–199 (LNHH…HVAI), 273–291 (MAHH…GHMY), 330–353 (IHFQ…QHMY), 369–395 (AALY…IFFI), 417–439 (AIIS…LYVH), and 517–535 (FLVH…LILV). Residues cysteine 559 and cysteine 568 each contribute to the [4Fe-4S] cluster site. The next 2 helical transmembrane spans lie at 575–596 (AFYL…YWHW) and 643–665 (LSVW…MFLI). Chlorophyll a-binding residues include histidine 654, methionine 662, and tyrosine 670. A phylloquinone-binding site is contributed by tryptophan 671. A helical transmembrane segment spans residues 707–727 (LVGLAHFSVGYIFTYAAFLIA).

The protein belongs to the PsaA/PsaB family. As to quaternary structure, the PsaA/B heterodimer binds the P700 chlorophyll special pair and subsequent electron acceptors. PSI consists of a core antenna complex that captures photons, and an electron transfer chain that converts photonic excitation into a charge separation. The eukaryotic PSI reaction center is composed of at least 11 subunits. P700 is a chlorophyll a/chlorophyll a' dimer, A0 is one or more chlorophyll a, A1 is one or both phylloquinones and FX is a shared 4Fe-4S iron-sulfur center. serves as cofactor.

It localises to the plastid. The protein resides in the chloroplast thylakoid membrane. The enzyme catalyses reduced [plastocyanin] + hnu + oxidized [2Fe-2S]-[ferredoxin] = oxidized [plastocyanin] + reduced [2Fe-2S]-[ferredoxin]. In terms of biological role, psaA and PsaB bind P700, the primary electron donor of photosystem I (PSI), as well as the electron acceptors A0, A1 and FX. PSI is a plastocyanin-ferredoxin oxidoreductase, converting photonic excitation into a charge separation, which transfers an electron from the donor P700 chlorophyll pair to the spectroscopically characterized acceptors A0, A1, FX, FA and FB in turn. Oxidized P700 is reduced on the lumenal side of the thylakoid membrane by plastocyanin. This chain is Photosystem I P700 chlorophyll a apoprotein A2, found in Capsella bursa-pastoris (Shepherd's purse).